The chain runs to 31 residues: Photosystem II reaction center protein T (31 aa).

The helical transmembrane segment at 3 to 23 (SFAYVLILTLAIATLFFAIAF) threads the bilayer.

It belongs to the PsbT family. In terms of assembly, PSII is composed of 1 copy each of membrane proteins PsbA, PsbB, PsbC, PsbD, PsbE, PsbF, PsbH, PsbI, PsbJ, PsbK, PsbL, PsbM, PsbT, PsbX, PsbY, PsbZ, Psb30/Ycf12, peripheral proteins PsbO, CyanoQ (PsbQ), PsbU, PsbV and a large number of cofactors. It forms dimeric complexes.

Its subcellular location is the cellular thylakoid membrane. Functionally, found at the monomer-monomer interface of the photosystem II (PS II) dimer, plays a role in assembly and dimerization of PSII. PSII is a light-driven water plastoquinone oxidoreductase, using light energy to abstract electrons from H(2)O, generating a proton gradient subsequently used for ATP formation. In Parasynechococcus marenigrum (strain WH8102), this protein is Photosystem II reaction center protein T.